The sequence spans 480 residues: uncharacterized protein (480 aa).

The helical transmembrane segment at 7–28 threads the bilayer; sequence HVISIFETFGAYFINIFYNFLY. Asparagine 73 and asparagine 195 each carry an N-linked (GlcNAc...) asparagine; by host glycan. Residues 195–235 are a coiled coil; sequence NRSLLYQIEELTSEKKSLLAELSTLRKKYEKRQSEYRRLVQ. Residues 297-332 are disordered; that stretch reads ELTSKSPSNYPVPQSRTIVSKPSDNYPVPQSRSSKI. The span at 301-329 shows a compositional bias: polar residues; it reads KSPSNYPVPQSRTIVSKPSDNYPVPQSRS. An N-linked (GlcNAc...) asparagine; by host glycan is attached at asparagine 455.

The protein belongs to the asfivirus B475L family.

It is found in the host membrane. This is an uncharacterized protein from African swine fever virus (isolate Pig/Kenya/KEN-50/1950) (ASFV).